A 350-amino-acid chain; its full sequence is Carbamoyl dehydratase HypE (350 aa).

Cysteine 350 bears the S-carbamoylcysteine mark. Residue cysteine 350 is modified to S-cyanocysteine.

The protein belongs to the HypE family. Modified by HypF, which adds a carboxamido group to the thiolate of the C-terminal cysteine, yielding a protein-S-carboxamide. The carboxamido group is then dehydrated by HypE itself to yield a protein-thiocyanate.

The catalysed reaction is C-terminal S-carboxamide-L-cysteinyl-[HypE protein] + ATP = C-terminal S-cyanate-L-cysteinyl-[HypE protein] + ADP + phosphate + H(+). The protein operates within protein modification; [NiFe] hydrogenase maturation. Its function is as follows. Involved in the maturation of [NiFe] hydrogenases. Along with HypF, it catalyzes the synthesis of the CN ligands of the active site iron of [NiFe]-hydrogenases. HypE catalyzes the ATP-dependent dehydration of the carboxamido group attached to its C-terminal cysteine to a cyano group. The sequence is that of Carbamoyl dehydratase HypE from Rhizobium leguminosarum bv. viciae.